A 171-amino-acid chain; its full sequence is Large ribosomal subunit protein uL15 (171 aa).

The span at 1–10 shows a compositional bias: polar residues; that stretch reads MKLNEISDNN. 2 disordered regions span residues 1–44 and 150–171; these read MKLN…RSGV and LPEA…NKAK. Gly residues predominate over residues 21–35; it reads RGIGSGKGKTAGRGQ. Basic and acidic residues predominate over residues 157 to 171; sequence EQEKKAARREANKAK.

It belongs to the universal ribosomal protein uL15 family. Part of the 50S ribosomal subunit.

Binds to the 23S rRNA. This chain is Large ribosomal subunit protein uL15, found in Novosphingobium aromaticivorans (strain ATCC 700278 / DSM 12444 / CCUG 56034 / CIP 105152 / NBRC 16084 / F199).